The following is a 198-amino-acid chain: Putative NADH dehydrogenase/NAD(P)H nitroreductase XOO4267 (198 aa).

The protein belongs to the nitroreductase family. HadB/RutE subfamily. FMN serves as cofactor.

The sequence is that of Putative NADH dehydrogenase/NAD(P)H nitroreductase XOO4267 from Xanthomonas oryzae pv. oryzae (strain KACC10331 / KXO85).